Consider the following 137-residue polypeptide: Putative pre-16S rRNA nuclease (137 aa).

Belongs to the YqgF nuclease family.

It localises to the cytoplasm. Functionally, could be a nuclease involved in processing of the 5'-end of pre-16S rRNA. In Bacillus mycoides (strain KBAB4) (Bacillus weihenstephanensis), this protein is Putative pre-16S rRNA nuclease.